Reading from the N-terminus, the 245-residue chain is DNA repair protein RecO (245 aa).

This sequence belongs to the RecO family.

Functionally, involved in DNA repair and RecF pathway recombination. The protein is DNA repair protein RecO of Bartonella bacilliformis (strain ATCC 35685 / KC583 / Herrer 020/F12,63).